The chain runs to 344 residues: Putative cyclin-Y-like protein 3 (344 aa).

One can recognise a Cyclin N-terminal domain in the interval 40 to 170; it reads ERYANRSLAI…FLELLEFNIH (131 aa).

This sequence belongs to the cyclin family. Cyclin Y subfamily.

This Homo sapiens (Human) protein is Putative cyclin-Y-like protein 3 (CCNYL3).